We begin with the raw amino-acid sequence, 321 residues long: Glycerol-3-phosphate dehydrogenase [NAD(P)+] (321 aa).

The NADPH site is built by S10, W11, R31, R32, Y47, and K98. The sn-glycerol 3-phosphate site is built by K98, G125, and S127. A129 lines the NADPH pocket. Positions 177, 230, 240, 241, and 242 each coordinate sn-glycerol 3-phosphate. K177 serves as the catalytic Proton acceptor. R241 contributes to the NADPH binding site. NADPH contacts are provided by V265 and E267.

This sequence belongs to the NAD-dependent glycerol-3-phosphate dehydrogenase family.

It localises to the cytoplasm. It catalyses the reaction sn-glycerol 3-phosphate + NAD(+) = dihydroxyacetone phosphate + NADH + H(+). The catalysed reaction is sn-glycerol 3-phosphate + NADP(+) = dihydroxyacetone phosphate + NADPH + H(+). It functions in the pathway membrane lipid metabolism; glycerophospholipid metabolism. Catalyzes the reduction of the glycolytic intermediate dihydroxyacetone phosphate (DHAP) to sn-glycerol 3-phosphate (G3P), the key precursor for phospholipid synthesis. In Thermotoga sp. (strain RQ2), this protein is Glycerol-3-phosphate dehydrogenase [NAD(P)+].